The primary structure comprises 275 residues: Large ribosomal subunit protein uL2 (275 aa).

Positions Ala224–Lys275 are disordered. Positions Lys264–Lys275 are enriched in basic and acidic residues.

This sequence belongs to the universal ribosomal protein uL2 family. As to quaternary structure, part of the 50S ribosomal subunit. Forms a bridge to the 30S subunit in the 70S ribosome.

Its function is as follows. One of the primary rRNA binding proteins. Required for association of the 30S and 50S subunits to form the 70S ribosome, for tRNA binding and peptide bond formation. It has been suggested to have peptidyltransferase activity; this is somewhat controversial. Makes several contacts with the 16S rRNA in the 70S ribosome. The chain is Large ribosomal subunit protein uL2 from Caldanaerobacter subterraneus subsp. tengcongensis (strain DSM 15242 / JCM 11007 / NBRC 100824 / MB4) (Thermoanaerobacter tengcongensis).